The following is a 538-amino-acid chain: MATGRLGVGETLEALNAAVGPGSPVWFKETHARHLRVRDFLAPRSALQARFRDGQVPECVFRAVSCLQGPGVAPVLRCAPTPAGLSLQLQRPAVFEHVLGALASYATPAKPASPGPRVVLHCPALRCNSGTLRLSQLRAVLVADHLVRVLRAHGVRVCSVPPVRDPHMSTFLQKLRVEWPTASKSTSTETLRTCVLANLNGSKEATLPPGVLGRLCLKELVEQRGTAGYDPSIDHCLVTEDVLSVLSELQEAVRHWPEGGHPGPAGRPDAGVDDCVVIHVVSCEEAFQQQKLDLLWQKLDDRAPHKQKHLVCGPVKMAGVPGTQLTAPQYYRLRHAQVCEASALKHGGDLAQDPAWTETFDILSVATIKFEMLSTAPQSQLLLAHSTISTKGTKSGTFVMYNCARLATLFEGYKHGTEQGLYPTFPLVSSLDFSLLHDEGEWLLLFNSVLPFLDLLSQTVSLAGTPGLHIPVRTEMVCKFLVQLSMDFSSYYNRVHILGEPRPHLFGQMFARLQLLRAVREVFHTGLAMLGLPPLSHI.

In terms of assembly, part of a complex containing tRNA(Arg) and METTL2. Interacts with tRNA(Arg)(CCU) and tRNA(Arg)(UCU). Interacts with METTL2.

Its function is as follows. Involved in tRNA methylation. Facilitates the recognition and targeting of tRNA(Arg)(CCU) and tRNA(Arg)(UCU) substrates for N(3)-methylcytidine modification by METTL2. This Mus musculus (Mouse) protein is DALR anticodon-binding domain-containing protein 3 (Dalrd3).